The sequence spans 263 residues: Hydroxyethylthiazole kinase 2 (263 aa).

Methionine 42 contributes to the substrate binding site. The ATP site is built by lysine 118 and threonine 164. Position 191 (glycine 191) interacts with substrate.

Belongs to the Thz kinase family. Requires Mg(2+) as cofactor.

It carries out the reaction 5-(2-hydroxyethyl)-4-methylthiazole + ATP = 4-methyl-5-(2-phosphooxyethyl)-thiazole + ADP + H(+). It functions in the pathway cofactor biosynthesis; thiamine diphosphate biosynthesis; 4-methyl-5-(2-phosphoethyl)-thiazole from 5-(2-hydroxyethyl)-4-methylthiazole: step 1/1. In terms of biological role, catalyzes the phosphorylation of the hydroxyl group of 4-methyl-5-beta-hydroxyethylthiazole (THZ). In Clostridium botulinum (strain Loch Maree / Type A3), this protein is Hydroxyethylthiazole kinase 2.